A 152-amino-acid polypeptide reads, in one-letter code: Male-specific protein scotti (152 aa).

The protein belongs to the male-specific scotti family.

Post-meiotically transcribed gene that has a role in late spermiogenesis; required for actin cone progression during spermatid individualization. The polypeptide is Male-specific protein scotti (Drosophila mojavensis (Fruit fly)).